We begin with the raw amino-acid sequence, 156 residues long: ATP synthase subunit b (156 aa).

Residues 13–33 (AFIIFVWFCMKFVWPPLMNAI) traverse the membrane as a helical segment.

Belongs to the ATPase B chain family. In terms of assembly, F-type ATPases have 2 components, F(1) - the catalytic core - and F(0) - the membrane proton channel. F(1) has five subunits: alpha(3), beta(3), gamma(1), delta(1), epsilon(1). F(0) has three main subunits: a(1), b(2) and c(10-14). The alpha and beta chains form an alternating ring which encloses part of the gamma chain. F(1) is attached to F(0) by a central stalk formed by the gamma and epsilon chains, while a peripheral stalk is formed by the delta and b chains.

Its subcellular location is the cell inner membrane. Functionally, f(1)F(0) ATP synthase produces ATP from ADP in the presence of a proton or sodium gradient. F-type ATPases consist of two structural domains, F(1) containing the extramembraneous catalytic core and F(0) containing the membrane proton channel, linked together by a central stalk and a peripheral stalk. During catalysis, ATP synthesis in the catalytic domain of F(1) is coupled via a rotary mechanism of the central stalk subunits to proton translocation. In terms of biological role, component of the F(0) channel, it forms part of the peripheral stalk, linking F(1) to F(0). The protein is ATP synthase subunit b of Shewanella woodyi (strain ATCC 51908 / MS32).